Here is a 284-residue protein sequence, read N- to C-terminus: Prestalk D11 protein (284 aa).

The first 25 residues, 1-25 (MLNKLILLLILSSCLVLSVKSEVNV), serve as a signal peptide directing secretion. An A-1 repeat occupies 25-64 (VDCSLVRCAQPICKPHYRLNMTDSCCGRCEPCTDVACTLQ). One copy of the B-1 repeat lies at 65–82 (VKYCQDGEVPTGCCPCTL). An A-2 repeat occupies 88–126 (DCSLVKCARPVCKPYYRLNMTDSCCGRCEPCTGVACTLQ). One copy of the B-2 repeat lies at 127 to 144 (IKYCKDGEVPTGCCPCTP). A C-1 repeat occupies 145–159 (QPTKKPDCSKVPCPK). One copy of the B-3 repeat lies at 161–178 (LKYCQEGELPTGCCPCTP). Residues 179–193 (QPTKKPDCSRVPCPK) form a C-2 repeat. One copy of the B-4 repeat lies at 195–212 (LKYCKEGELPTGCCPCTP). A C-3 repeat occupies 213 to 228 (QPTKKPDCSDVMCTMD). A B-5 repeat occupies 229–246 (IRYCKNGELPTGCCPCTP). A C-4 repeat occupies 247 to 262 (QETKVPDCSKAMCTMD). One copy of the B-6 repeat lies at 263 to 278 (IKYCKPGEKPFGCCPC).

This chain is Prestalk D11 protein (ampA), found in Dictyostelium discoideum (Social amoeba).